The sequence spans 298 residues: Mitochondrial nicotinamide adenine dinucleotide transporter SLC25A51 (298 aa).

Positions 1 to 11 are enriched in basic and acidic residues; the sequence is MMDSEAHEKRP. Residues 1–21 are disordered; the sequence is MMDSEAHEKRPPMLTSSNQDL. 3 Solcar repeats span residues 28–108, 117–201, and 214–297; these read VGDM…LSRL, PEFA…IKES, and NDFI…LLKI. 6 helical membrane passes run 36–56, 85–105, 119–139, 180–200, 216–236, and 269–290; these read CGYC…KILF, LPPL…YEDL, FATR…LTPF, ILFR…PIKE, FICG…INVV, and LFRG…INAT.

The protein belongs to the mitochondrial carrier (TC 2.A.29) family.

Its subcellular location is the mitochondrion inner membrane. It carries out the reaction NAD(+)(in) = NAD(+)(out). Mitochondrial membrane carrier protein that mediates the import of NAD(+) into mitochondria. Mitochondrial NAD(+) is required for glycolysis and mitochondrial respiration. Compared to SLC25A52, SLC25A51-mediated transport is essential for the import of NAD(+) in mitochondria. The transport mechanism, uniport or antiport, its electrogenicity and substrate selectivity, remain to be elucidated. The chain is Mitochondrial nicotinamide adenine dinucleotide transporter SLC25A51 from Mus musculus (Mouse).